A 263-amino-acid polypeptide reads, in one-letter code: MLHPVWGCVVAVMGVLWFYSSGVQSQCWEHSQCRDLASEANILECIQACKVDLSAESPLFPGNGHLQPTSEDIQNYVMSHFHWNTFGQRMNGTPGGSKREGASTALSVLLEALSQPRDEVERESEEEEGLQQHRRDDKRSYSMEHFRWGKPVGRKRRPVKVYPNGVEEESAESYPAEIRRDLSLKLDYPQGEELEEVFGGENDLLNLQKKDGSYKMNHFRWSGPPKDKRYGGFMKSWDERSQKPLLTLFKNVMIKDGHEKKGQ.

Residues 1-25 (MLHPVWGCVVAVMGVLWFYSSGVQS) form the signal peptide. Residue Gln-26 is modified to Pyrrolidone carboxylic acid. 2 cysteine pairs are disulfide-bonded: Cys-27–Cys-49 and Cys-33–Cys-45. The tract at residues 114–142 (SQPRDEVERESEEEEGLQQHRRDDKRSYS) is disordered. Positions 130 to 142 (LQQHRRDDKRSYS) are enriched in basic and acidic residues. Val-152 is modified (valine amide).

This sequence belongs to the POMC family. Post-translationally, specific enzymatic cleavages at paired basic residues yield the different active peptides.

It localises to the secreted. Stimulates the adrenal glands to release cortisol. Functionally, anorexigenic peptide. Increases the pigmentation of skin by increasing melanin production in melanocytes. Its function is as follows. Increases the pigmentation of skin by increasing melanin production in melanocytes. In terms of biological role, endogenous orexigenic opiate. Endogenous opiate. In Acipenser transmontanus (White sturgeon), this protein is Pro-opiomelanocortin (pomc).